Here is a 342-residue protein sequence, read N- to C-terminus: Serine/threonine-protein kinase SAPK1 (342 aa).

The 257-residue stretch at 4–260 (YEVMRDIGSG…IPEIKNHPWF (257 aa)) folds into the Protein kinase domain. ATP is bound by residues 10–18 (IGSGNFGVA) and lysine 33. Catalysis depends on aspartate 123, which acts as the Proton acceptor. A C-terminal region spans residues 253–342 (EIKNHPWFLK…ENSGDFVCAL (90 aa)).

Belongs to the protein kinase superfamily. Ser/Thr protein kinase family. In terms of processing, phosphorylated. As to expression, expressed in leaf blades, leaf sheaths and roots. Expressed in shoots and roots of young seedlings.

It catalyses the reaction L-seryl-[protein] + ATP = O-phospho-L-seryl-[protein] + ADP + H(+). It carries out the reaction L-threonyl-[protein] + ATP = O-phospho-L-threonyl-[protein] + ADP + H(+). With respect to regulation, activated by phosphorylation in response to hyperosmotic stress within 5 minutes. May play a role in signal transduction of hyperosmotic response. The chain is Serine/threonine-protein kinase SAPK1 (SAPK1) from Oryza sativa subsp. japonica (Rice).